We begin with the raw amino-acid sequence, 428 residues long: Glutamyl-tRNA reductase (428 aa).

Substrate-binding positions include 49-52 (TCNR), serine 109, 114-116 (EGQ), and glutamine 120. Catalysis depends on cysteine 50, which acts as the Nucleophile. 189–194 (GAGKMS) is an NADP(+) binding site.

This sequence belongs to the glutamyl-tRNA reductase family. Homodimer.

The catalysed reaction is (S)-4-amino-5-oxopentanoate + tRNA(Glu) + NADP(+) = L-glutamyl-tRNA(Glu) + NADPH + H(+). It participates in porphyrin-containing compound metabolism; protoporphyrin-IX biosynthesis; 5-aminolevulinate from L-glutamyl-tRNA(Glu): step 1/2. It functions in the pathway porphyrin-containing compound metabolism; chlorophyll biosynthesis. Functionally, catalyzes the NADPH-dependent reduction of glutamyl-tRNA(Glu) to glutamate 1-semialdehyde (GSA). This is Glutamyl-tRNA reductase from Gloeothece citriformis (strain PCC 7424) (Cyanothece sp. (strain PCC 7424)).